The chain runs to 507 residues: Rhomboid protease GluP (507 aa).

Helical transmembrane passes span 179-199 (FTYL…INGG), 229-249 (IVLH…WSVG), 261-281 (FLLI…VFSP), 283-303 (PSAG…YVAL), and 312-332 (TIGT…FAVS). Catalysis depends on serine 288, which acts as the Nucleophile. Histidine 339 functions as the Charge relay system in the catalytic mechanism. The next 2 helical transmembrane spans lie at 340-360 (IGGL…KAGA) and 365-385 (LLSA…GLHS). TPR repeat units follow at residues 424–457 (ADLL…EPKD) and 458–491 (HASY…KPKE).

It belongs to the peptidase S54 family.

The protein localises to the cell membrane. It catalyses the reaction Cleaves type-1 transmembrane domains using a catalytic dyad composed of serine and histidine that are contributed by different transmembrane domains.. Its activity is regulated as follows. Inhibited by dichloroisocoumarin (DCI) and N-p-tosyl-L-phenylalanine chloromethyl ketone (TPCK), but not by other serine protease inhibitors such as sulfonyl fluoride PMSF and 4-(2-aminoethyl)benzenesulfonyl fluoride (AEBSF). Functionally, rhomboid-type serine protease that catalyzes intramembrane proteolysis. Important for normal cell division and sporulation. May act as a glucose exporter. In Bacillus subtilis (strain 168), this protein is Rhomboid protease GluP (gluP).